We begin with the raw amino-acid sequence, 394 residues long: Cytochrome b (394 aa).

4 consecutive transmembrane segments (helical) span residues 39-59 (FGSLAGICLVIQIVTGVFLAM), 83-105 (WLLRYMHANGASMFFIVVYLHTF), 120-140 (VWCLGVVIFLLMIVTAFIGYV), and 186-206 (FFSLYHLLPFILVGASLLHLA). Residues His89 and His103 each contribute to the heme b site. Residues His191 and His204 each contribute to the heme b site. Residue His209 coordinates a ubiquinone. Helical transmembrane passes span 232-252 (FYVKDLVGWVAFAIFFSIWIF), 296-316 (AGGVAAIALVFICLLALPFFK), 328-348 (IYQGIFWLLLADCLLLGWIGC), and 355-374 (FVTIGQISSIVFFLFFAITP).

It belongs to the cytochrome b family. In terms of assembly, the main subunits of complex b-c1 are: cytochrome b, cytochrome c1 and the Rieske protein. Requires heme b as cofactor.

It localises to the mitochondrion inner membrane. Its function is as follows. Component of the ubiquinol-cytochrome c reductase complex (complex III or cytochrome b-c1 complex) that is part of the mitochondrial respiratory chain. The b-c1 complex mediates electron transfer from ubiquinol to cytochrome c. Contributes to the generation of a proton gradient across the mitochondrial membrane that is then used for ATP synthesis. This chain is Cytochrome b (MT-CYB), found in Oenothera berteroana (Bertero's evening primrose).